Reading from the N-terminus, the 193-residue chain is dCTP deaminase, dUMP-forming (193 aa).

Residues 101–106, D119, 127–129, Q148, Y162, and Q174 contribute to the dCTP site; these read KSSLGR and TLE. Residue E129 is the Proton donor/acceptor of the active site. Positions 160 to 193 are disordered; it reads TPYGSGSLGSKYQGQRGPTPSKGYLNFSSEQDSD. Residues 167–177 are compositionally biased toward polar residues; it reads LGSKYQGQRGP.

It belongs to the dCTP deaminase family. As to quaternary structure, homotrimer.

It carries out the reaction dCTP + 2 H2O = dUMP + NH4(+) + diphosphate. The protein operates within pyrimidine metabolism; dUMP biosynthesis; dUMP from dCTP: step 1/1. Its function is as follows. Bifunctional enzyme that catalyzes both the deamination of dCTP to dUTP and the hydrolysis of dUTP to dUMP without releasing the toxic dUTP intermediate. The chain is dCTP deaminase, dUMP-forming from Corynebacterium efficiens (strain DSM 44549 / YS-314 / AJ 12310 / JCM 11189 / NBRC 100395).